Reading from the N-terminus, the 260-residue chain is Adenosylcobinamide-GDP ribazoletransferase (260 aa).

6 consecutive transmembrane segments (helical) span residues 40-60 (AFPL…FMAY), 64-84 (LPPL…TGAL), 117-137 (FAAL…MTII), 192-212 (GIGL…LSLI), 214-234 (ALVL…AKIG), and 240-260 (TLGA…VMAL).

Belongs to the CobS family. Mg(2+) serves as cofactor.

The protein resides in the cell inner membrane. It catalyses the reaction alpha-ribazole + adenosylcob(III)inamide-GDP = adenosylcob(III)alamin + GMP + H(+). The enzyme catalyses alpha-ribazole 5'-phosphate + adenosylcob(III)inamide-GDP = adenosylcob(III)alamin 5'-phosphate + GMP + H(+). The protein operates within cofactor biosynthesis; adenosylcobalamin biosynthesis; adenosylcobalamin from cob(II)yrinate a,c-diamide: step 7/7. Joins adenosylcobinamide-GDP and alpha-ribazole to generate adenosylcobalamin (Ado-cobalamin). Also synthesizes adenosylcobalamin 5'-phosphate from adenosylcobinamide-GDP and alpha-ribazole 5'-phosphate. The protein is Adenosylcobinamide-GDP ribazoletransferase of Brucella anthropi (strain ATCC 49188 / DSM 6882 / CCUG 24695 / JCM 21032 / LMG 3331 / NBRC 15819 / NCTC 12168 / Alc 37) (Ochrobactrum anthropi).